The chain runs to 499 residues: Patatin-like protein 6 (499 aa).

Residues leucine 111–isoleucine 314 enclose the PNPLA domain. The GGXR motif lies at glycine 116–arginine 119. Serine 155 functions as the Nucleophile in the catalytic mechanism. Residue aspartate 301 is the Proton acceptor of the active site. The DGA/G signature appears at aspartate 301 to glycine 303.

Belongs to the patatin family. In terms of tissue distribution, highly expressed in siliques and at lower levels in roots and flowers.

In terms of biological role, possesses non-specific lipolytic acyl hydrolase (LAH) activity. Hydrolyzes phospholipids as well as galactolipids. May play a role in disease resistance. The protein is Patatin-like protein 6 (PLP6) of Arabidopsis thaliana (Mouse-ear cress).